The primary structure comprises 631 residues: Phosphomethylpyrimidine synthase (631 aa).

Residues Asn-239, Met-268, Tyr-297, His-333, 353–355, 394–397, and Glu-433 contribute to the substrate site; these read SRG and DGLR. A Zn(2+)-binding site is contributed by His-437. Tyr-460 provides a ligand contact to substrate. His-501 provides a ligand contact to Zn(2+). Residues Cys-581, Cys-584, and Cys-589 each contribute to the [4Fe-4S] cluster site.

It belongs to the ThiC family. In terms of assembly, homodimer. It depends on [4Fe-4S] cluster as a cofactor.

It carries out the reaction 5-amino-1-(5-phospho-beta-D-ribosyl)imidazole + S-adenosyl-L-methionine = 4-amino-2-methyl-5-(phosphooxymethyl)pyrimidine + CO + 5'-deoxyadenosine + formate + L-methionine + 3 H(+). The protein operates within cofactor biosynthesis; thiamine diphosphate biosynthesis. Its function is as follows. Catalyzes the synthesis of the hydroxymethylpyrimidine phosphate (HMP-P) moiety of thiamine from aminoimidazole ribotide (AIR) in a radical S-adenosyl-L-methionine (SAM)-dependent reaction. In Shigella flexneri serotype 5b (strain 8401), this protein is Phosphomethylpyrimidine synthase.